Reading from the N-terminus, the 107-residue chain is U1-lycotoxin-Ls1b (107 aa).

An N-terminal signal peptide occupies residues 1-20 (MMKALVVVALLVTLISYSSS). A propeptide spanning residues 21-41 (EGIDDLEADELLSLMANEQTR) is cleaved from the precursor. Cystine bridges form between cysteine 44–cysteine 59, cysteine 51–cysteine 68, cysteine 58–cysteine 86, and cysteine 70–cysteine 84.

It belongs to the neurotoxin 19 (CSTX) family. 04 (U1-Lctx) subfamily. Expressed by the venom gland.

The protein resides in the secreted. The protein is U1-lycotoxin-Ls1b of Lycosa singoriensis (Wolf spider).